Consider the following 507-residue polypeptide: Cytochrome P450 monooxygenase ptmU (507 aa).

The chain crosses the membrane as a helical span at residues 4–24; sequence VNAWWVGGSLLLGIWAIVVFF. Residues N98, N202, and N398 are each glycosylated (N-linked (GlcNAc...) asparagine). C444 contributes to the heme binding site.

The protein belongs to the cytochrome P450 family. Heme is required as a cofactor.

Its subcellular location is the membrane. Its pathway is secondary metabolite biosynthesis. Functionally, cytochrome P450 monooxygenase; part of the gene cluster that mediates the biosynthesis of the indole diterpenes penitrems. The geranylgeranyl diphosphate (GGPP) synthase ptmG catalyzes the first step in penitrem biosynthesis via conversion of farnesyl pyrophosphate and isopentyl pyrophosphate into geranylgeranyl pyrophosphate (GGPP). Condensation of indole-3-glycerol phosphate with GGPP by the prenyl transferase ptmC then forms 3-geranylgeranylindole (3-GGI). Epoxidation by the FAD-dependent monooxygenase ptmM leads to a epoxidized-GGI that is substrate of the terpene cyclase ptmB for cyclization to yield paspaline. Paspaline is subsequently converted to 13-desoxypaxilline by the cytochrome P450 monooxygenase ptmP, the latter being then converted to paxilline by the cytochrome P450 monooxygenase ptmQ. Paxilline is converted to beta-paxitriol via C-10 ketoreduction by the short-chain dehydrogenase ptmH which can be monoprenylated at the C-20 by the indole diterpene prenyltransferase ptmD. A two-step elimination (acetylation and elimination) process performed by the O-acetyltransferase ptmV and ptmI leads to the production of the prenylated form of penijanthine. The FAD-linked oxidoreductase ptmO then converts the prenylated form of penijanthine into PC-M5 which is in turn transformed into PC-M4 by the aromatic dimethylallyltransferase ptmE. Five sequential oxidative transformations performed by the cytochrome P450 monooxygenases ptmK, ptmU, ptmL, ptmN and ptmJ yield the various penitrem compounds. PtmK, ptmU and ptmM are involved in the formation of the key bicyclic ring of penitrem C via the formation of the intermediates secopenitrem D and penitrem D. PtmL catalyzes the epoxidation of penitrem D and C to yield penitrem B and F, respectively. PtmJ catalyzes the last benzylic hydroxylation to convert penitrem B to prenitrem E and penitrem F to penitrem A. The polypeptide is Cytochrome P450 monooxygenase ptmU (Penicillium ochrochloron).